The chain runs to 504 residues: tRNA (uracil-5-)-methyltransferase homolog B (504 aa).

The N-terminal 16 residues, 1–16 (MAGLKRRVPLHSLRYF), are a transit peptide targeting the mitochondrion. Positions 323, 373, and 423 each coordinate S-adenosyl-L-methionine. Cysteine 451 functions as the Nucleophile in the catalytic mechanism. Glutamate 497 serves as the catalytic Proton acceptor.

It belongs to the class I-like SAM-binding methyltransferase superfamily. RNA M5U methyltransferase family.

The protein localises to the mitochondrion. The protein resides in the mitochondrion matrix. The enzyme catalyses uridine(54) in tRNA + S-adenosyl-L-methionine = 5-methyluridine(54) in tRNA + S-adenosyl-L-homocysteine + H(+). It carries out the reaction a uridine in 12S rRNA + S-adenosyl-L-methionine = a 5-methyluridine in 12S rRNA + S-adenosyl-L-homocysteine + H(+). Its function is as follows. Mitochondrial S-adenosyl-L-methionine-dependent methyltransferase that catalyzes the formation of 5-methyl-uridine in tRNAs and 12S rRNA. Catalyzes the methylation of uridine at position 54 (m5U54) in all tRNAs. Specifically methylates the uridine in position 429 of 12S rRNA (m5U429). Does not affect RNA stability or mitochondrial translation. This is tRNA (uracil-5-)-methyltransferase homolog B from Homo sapiens (Human).